The sequence spans 965 residues: Collagen alpha-1(I) chain (965 aa).

The segment at 1-965 (GGISVPGPMG…PGPPGPPGPP (965 aa)) is disordered. 11 positions are modified to 4-hydroxyproline: proline 18, proline 21, proline 23, proline 32, proline 35, proline 38, proline 53, proline 68, proline 74, proline 83, and proline 89. A compositionally biased stretch (low complexity) spans 26 to 44 (QGFQGPPGEPGEPGSSGPM). A compositionally biased stretch (basic and acidic residues) spans 56 to 70 (NGDDGEAGKPGRPGE). Lysine 92 carries the post-translational modification 5-hydroxylysine; alternate. Residue lysine 92 is glycosylated (O-linked (Gal...) hydroxylysine; alternate). Serine 98 bears the Phosphoserine mark. Residues 106–122 (DAGPAGPKGEPGSPGEN) show a composition bias toward low complexity. Proline 116, proline 119, proline 125, proline 139, proline 160, proline 169, proline 172, proline 199, proline 202, proline 214, proline 220, proline 229, proline 235, proline 238, and proline 253 each carry 4-hydroxyproline. A compositionally biased stretch (low complexity) spans 139–157 (PGASGPAGARGNDGATGAA). Positions 159–171 (PPGPTGPAGPPGF) are enriched in pro residues. Positions 205 to 244 (AGAAGPAGNPGADGQPGAKGANGAPGIAGAPGFPGARGPS) are enriched in low complexity. Residue lysine 256 is modified to 5-hydroxylysine. 8 positions are modified to 4-hydroxyproline: proline 262, proline 265, proline 269, proline 278, proline 293, proline 299, proline 308, and proline 314. The segment covering 303–312 (GERGGPGSRG) has biased composition (gly residues). The residue at position 323 (lysine 323) is a 5-hydroxylysine. 4-hydroxyproline occurs at positions 326, 332, 338, 347, 350, 359, 368, 374, 386, 395, 404, 407, 425, 442, 448, 454, 460, 466, 472, 484, 493, 506, 512, and 521. The span at 341–367 (KGLTGSPGSPGPDGKTGPPGPAGQDGR) shows a compositional bias: low complexity. A compositionally biased stretch (low complexity) spans 376–395 (ARGQAGVMGFPGPKGAAGEP). Residues 454–463 (PGEAGKPGEQ) are compositionally biased toward low complexity. Lysine 533 bears the 5-hydroxylysine mark. Proline 539, proline 554, and proline 560 each carry 4-hydroxyproline. A compositionally biased stretch (low complexity) spans 566-580 (SGPSGPAGPTGARGA). Serine 569 bears the Phosphoserine mark. 4-hydroxyproline occurs at positions 581, 587, 590, 599, 605, 623, 632, and 641. Residues 593-620 (AGFAGPPGADGQPGAKGEPGDAGAKGDA) show a composition bias toward low complexity. At lysine 644 the chain carries 5-hydroxylysine. Positions 649 to 665 (SAGPPGATGFPGAAGRV) are enriched in low complexity. 2 positions are modified to 4-hydroxyproline: proline 653 and proline 659. 3-hydroxyproline is present on proline 667. 4-hydroxyproline is present on residues proline 668, proline 677, proline 680, proline 716, proline 725, proline 743, proline 752, proline 755, proline 761, proline 776, proline 782, proline 788, proline 796, and proline 802. Residues 710–725 (SGEKGSPGADGPAGAP) show a composition bias toward low complexity. Positions 775-785 (PPGPMGPPGLA) are enriched in pro residues. Lysine 811 is modified (5-hydroxylysine). 4-hydroxyproline occurs at positions 819, 822, and 825. The span at 819 to 831 (PGAPGAPGAPGPV) shows a compositional bias: pro residues. Residues 851-865 (AGPAGARGPAGPQGP) are compositionally biased toward low complexity. A compositionally biased stretch (basic and acidic residues) spans 866–880 (RGDKGETGEQGDRGI). Lysine 869 carries the 5-hydroxylysine modification. The residue at position 881 (lysine 881) is a 5-hydroxylysine; alternate. The O-linked (Gal...) hydroxylysine; alternate glycan is linked to lysine 881. Residues proline 896, proline 899, proline 917, and proline 932 each carry the 4-hydroxyproline modification. The span at 899-932 (PGEQGPSGASGPAGPRGPPGSAGSPGKDGLNGLP) shows a compositional bias: low complexity. At proline 937 the chain carries 3-hydroxyproline. A 4-hydroxyproline modification is found at proline 938. Residues 950–965 (VGPPGPPGPPGPPGPP) show a composition bias toward pro residues. 3-hydroxyproline is present on proline 952. Proline 953 carries the 4-hydroxyproline modification. Proline 955 is subject to 3-hydroxyproline. Proline 956 bears the 4-hydroxyproline mark. At proline 958 the chain carries 3-hydroxyproline. A 4-hydroxyproline mark is found at proline 959, proline 962, and proline 965.

Belongs to the fibrillar collagen family. In terms of assembly, trimers of one alpha 2(I) and two alpha 1(I) chains. Post-translationally, contains mostly 4-hydroxyproline. Proline residues at the third position of the tripeptide repeating unit (G-X-Y) are hydroxylated in some or all of the chains. Contains 3-hydroxyproline at a few sites. This modification occurs on the first proline residue in the sequence motif Gly-Pro-Hyp, where Hyp is 4-hydroxyproline. In terms of processing, lysine residues at the third position of the tripeptide repeating unit (G-X-Y) are 5-hydroxylated in some or all of the chains. Post-translationally, O-glycosylated on hydroxylated lysine residues. The O-linked glycan consists of a Glc-Gal disaccharide. Expressed in bones.

It is found in the secreted. It localises to the extracellular space. Its subcellular location is the extracellular matrix. In terms of biological role, type I collagen is a member of group I collagen (fibrillar forming collagen). The chain is Collagen alpha-1(I) chain from Acratocnus sp. (strain SLP-2019) (Ground sloth).